The following is a 396-amino-acid chain: Flavohemoprotein (396 aa).

Residues Met-1–Ala-136 form the Globin domain. His-85 is a binding site for heme b. Residues Tyr-95 and Glu-135 each act as charge relay system in the active site. The reductase stretch occupies residues Gly-147 to Leu-396. The FAD-binding FR-type domain occupies Glu-150–Ala-255. FAD contacts are provided by residues Tyr-188 and Arg-204–Ser-207. Position 268-273 (Gly-268–Pro-273) interacts with NADP(+). An FAD-binding site is contributed by Cys-389–Pro-392.

It belongs to the globin family. Two-domain flavohemoproteins subfamily. The protein in the C-terminal section; belongs to the flavoprotein pyridine nucleotide cytochrome reductase family. Requires heme b as cofactor. FAD is required as a cofactor.

It catalyses the reaction 2 nitric oxide + NADPH + 2 O2 = 2 nitrate + NADP(+) + H(+). It carries out the reaction 2 nitric oxide + NADH + 2 O2 = 2 nitrate + NAD(+) + H(+). Is involved in NO detoxification in an aerobic process, termed nitric oxide dioxygenase (NOD) reaction that utilizes O(2) and NAD(P)H to convert NO to nitrate, which protects the bacterium from various noxious nitrogen compounds. Therefore, plays a central role in the inducible response to nitrosative stress. This Escherichia coli O6:H1 (strain CFT073 / ATCC 700928 / UPEC) protein is Flavohemoprotein.